A 117-amino-acid polypeptide reads, in one-letter code: Hainantoxin-XV-2 (117 aa).

Residues M1 to S20 form the signal peptide. A disordered region spans residues S20 to E55. The propeptide occupies S21–R56. Residues N23–E55 show a composition bias toward basic and acidic residues. Cystine bridges form between C58-C72, C65-C78, C69-C115, and C71-C91.

This sequence belongs to the neurotoxin 03 (Tx2) family. 02 subfamily. HNTX-XV sub-subfamily. As to expression, expressed by the venom gland.

The protein resides in the secreted. Putative ion channel inhibitor. In Cyriopagopus hainanus (Chinese bird spider), this protein is Hainantoxin-XV-2.